A 688-amino-acid chain; its full sequence is Glycine--tRNA ligase beta subunit (688 aa).

It belongs to the class-II aminoacyl-tRNA synthetase family. As to quaternary structure, tetramer of two alpha and two beta subunits.

Its subcellular location is the cytoplasm. The catalysed reaction is tRNA(Gly) + glycine + ATP = glycyl-tRNA(Gly) + AMP + diphosphate. This Desulforudis audaxviator (strain MP104C) protein is Glycine--tRNA ligase beta subunit.